A 294-amino-acid chain; its full sequence is Acetylglutamate kinase (294 aa).

Residues 64–65 (GG), R86, and N189 each bind substrate.

The protein belongs to the acetylglutamate kinase family. ArgB subfamily.

It localises to the cytoplasm. The enzyme catalyses N-acetyl-L-glutamate + ATP = N-acetyl-L-glutamyl 5-phosphate + ADP. Its pathway is amino-acid biosynthesis; L-arginine biosynthesis; N(2)-acetyl-L-ornithine from L-glutamate: step 2/4. Catalyzes the ATP-dependent phosphorylation of N-acetyl-L-glutamate. The protein is Acetylglutamate kinase of Carboxydothermus hydrogenoformans (strain ATCC BAA-161 / DSM 6008 / Z-2901).